The following is a 123-amino-acid chain: Large ribosomal subunit protein uL14 (123 aa).

Belongs to the universal ribosomal protein uL14 family. In terms of assembly, part of the 50S ribosomal subunit. Forms a cluster with proteins L3 and L19. In the 70S ribosome, L14 and L19 interact and together make contacts with the 16S rRNA in bridges B5 and B8.

Its function is as follows. Binds to 23S rRNA. Forms part of two intersubunit bridges in the 70S ribosome. In Buchnera aphidicola subsp. Acyrthosiphon kondoi (Acyrthosiphon kondoi symbiotic bacterium), this protein is Large ribosomal subunit protein uL14.